Here is a 511-residue protein sequence, read N- to C-terminus: Maturase K (511 aa).

The protein belongs to the intron maturase 2 family. MatK subfamily.

The protein localises to the plastid. It is found in the chloroplast. In terms of biological role, usually encoded in the trnK tRNA gene intron. Probably assists in splicing its own and other chloroplast group II introns. The chain is Maturase K from Trifolium burchellianum (Wild clover).